The chain runs to 185 residues: Ribosome-recycling factor (185 aa).

It belongs to the RRF family.

It is found in the cytoplasm. In terms of biological role, responsible for the release of ribosomes from messenger RNA at the termination of protein biosynthesis. May increase the efficiency of translation by recycling ribosomes from one round of translation to another. The chain is Ribosome-recycling factor from Thermomicrobium roseum (strain ATCC 27502 / DSM 5159 / P-2).